The following is a 610-amino-acid chain: GATOR complex protein NPRL3 (610 aa).

Ser437 carries the phosphoserine modification. The interval 474 to 501 is disordered; sequence REASEDHSSLASDNIAVQPSSSHKSNFS. The span at 482–501 shows a compositional bias: polar residues; the sequence is SLASDNIAVQPSSSHKSNFS.

This sequence belongs to the NPR3 family. Component of the GATOR complex consisting of mio, Nup44A/Seh1, Im11, Nplr3, Nplr2, Wdr24, Wdr59 and Sec13. Within the GATOR complex, probable component of the GATOR1 subcomplex which is likely composed of Iml1, Nplr2 and Nplr3. Interacts with Nprl2.

It is found in the cytoplasm. Its subcellular location is the lysosome. Its function is as follows. An essential component of the GATOR subcomplex GATOR1 which functions as an inhibitor of the amino acid-sensing branch of the TORC1 signaling pathway. The two GATOR subcomplexes, GATOR1 and GATOR2, regulate the TORC1 pathway in order to mediate metabolic homeostasis, female gametogenesis and the response to amino acid limitation and complete starvation. The function of GATOR1 in negatively regulating the TORC1 pathway is essential for maintaining baseline levels of TORC1 activity under nutrient rich conditions, and for promoting survival during amino acid or complete starvation by inhibiting TORC1-dependent cell growth and promoting catabolic metabolism and autophagy. In addition, this inhibition of TORC1 is necessary to maintain female fertility under normal conditions and during periods of nutrient stress. GATOR1 and GATOR2 act at different stages of oogenesis to regulate TORC1 in order to control meiotic entry and promote oocyte growth and development. After exactly four mitotic cyst divisions, the GATOR1 complex members (Iml1, Nprl2 and Nprl3) down-regulate TORC1 to slow cellular metabolism and promote the mitotic/meiotic transition. At later stages of oogenesis, the mio and Nup44A components of the GATOR2 complex inhibit GATOR1 and thus activate TORC1 to promote meiotic progression, and drive oocyte growth and development. In Drosophila melanogaster (Fruit fly), this protein is GATOR complex protein NPRL3.